A 157-amino-acid polypeptide reads, in one-letter code: Ribosomal RNA large subunit methyltransferase H (157 aa).

S-adenosyl-L-methionine is bound by residues Leu-75, Gly-106, and 125-130; that span reads FSELTF.

It belongs to the RNA methyltransferase RlmH family. Homodimer.

Its subcellular location is the cytoplasm. The catalysed reaction is pseudouridine(1915) in 23S rRNA + S-adenosyl-L-methionine = N(3)-methylpseudouridine(1915) in 23S rRNA + S-adenosyl-L-homocysteine + H(+). Functionally, specifically methylates the pseudouridine at position 1915 (m3Psi1915) in 23S rRNA. This is Ribosomal RNA large subunit methyltransferase H from Malacoplasma penetrans (strain HF-2) (Mycoplasma penetrans).